The chain runs to 66 residues: Large ribosomal subunit protein bL32 (66 aa).

This sequence belongs to the bacterial ribosomal protein bL32 family.

In Rickettsia canadensis (strain McKiel), this protein is Large ribosomal subunit protein bL32.